The primary structure comprises 223 residues: DNA mismatch repair protein MutH (223 aa).

This sequence belongs to the MutH family.

The protein localises to the cytoplasm. In terms of biological role, sequence-specific endonuclease that cleaves unmethylated GATC sequences. It is involved in DNA mismatch repair. This is DNA mismatch repair protein MutH from Shewanella baltica (strain OS195).